Reading from the N-terminus, the 379-residue chain is UDP-4-amino-4-deoxy-L-arabinose--oxoglutarate aminotransferase (379 aa).

Lys182 carries the N6-(pyridoxal phosphate)lysine modification.

It belongs to the DegT/DnrJ/EryC1 family. ArnB subfamily. As to quaternary structure, homodimer. Pyridoxal 5'-phosphate serves as cofactor.

It catalyses the reaction UDP-4-amino-4-deoxy-beta-L-arabinose + 2-oxoglutarate = UDP-beta-L-threo-pentopyranos-4-ulose + L-glutamate. Its pathway is nucleotide-sugar biosynthesis; UDP-4-deoxy-4-formamido-beta-L-arabinose biosynthesis; UDP-4-deoxy-4-formamido-beta-L-arabinose from UDP-alpha-D-glucuronate: step 2/3. It functions in the pathway bacterial outer membrane biogenesis; lipopolysaccharide biosynthesis. In terms of biological role, catalyzes the conversion of UDP-4-keto-arabinose (UDP-Ara4O) to UDP-4-amino-4-deoxy-L-arabinose (UDP-L-Ara4N). The modified arabinose is attached to lipid A and is required for resistance to polymyxin and cationic antimicrobial peptides. This chain is UDP-4-amino-4-deoxy-L-arabinose--oxoglutarate aminotransferase, found in Shigella flexneri.